Consider the following 228-residue polypeptide: Probable septum site-determining protein MinC (228 aa).

It belongs to the MinC family. As to quaternary structure, interacts with MinD and FtsZ.

Its function is as follows. Cell division inhibitor that blocks the formation of polar Z ring septums. Rapidly oscillates between the poles of the cell to destabilize FtsZ filaments that have formed before they mature into polar Z rings. Prevents FtsZ polymerization. This is Probable septum site-determining protein MinC from Yersinia pseudotuberculosis serotype O:1b (strain IP 31758).